Consider the following 253-residue polypeptide: Probable U3 small nucleolar RNA-associated protein 11 (253 aa).

The segment at 1-26 (MAAAFRKAAKSRQREHRERSQPGFRK) is disordered. Residues lysine 74, lysine 83, and lysine 86 each participate in a glycyl lysine isopeptide (Lys-Gly) (interchain with G-Cter in SUMO2) cross-link. Threonine 90 carries the post-translational modification Phosphothreonine. Glycyl lysine isopeptide (Lys-Gly) (interchain with G-Cter in SUMO2) cross-links involve residues lysine 103, lysine 120, lysine 143, lysine 144, lysine 180, lysine 211, lysine 218, lysine 235, and lysine 236. Residue serine 241 is modified to Phosphoserine. A Glycyl lysine isopeptide (Lys-Gly) (interchain with G-Cter in SUMO2) cross-link involves residue lysine 246.

The protein belongs to the UTP11 family. Part of the small subunit (SSU) processome, composed of more than 70 proteins and the RNA chaperone small nucleolar RNA (snoRNA) U3.

It localises to the nucleus. Its subcellular location is the nucleolus. Part of the small subunit (SSU) processome, first precursor of the small eukaryotic ribosomal subunit. During the assembly of the SSU processome in the nucleolus, many ribosome biogenesis factors, an RNA chaperone and ribosomal proteins associate with the nascent pre-rRNA and work in concert to generate RNA folding, modifications, rearrangements and cleavage as well as targeted degradation of pre-ribosomal RNA by the RNA exosome. Involved in nucleolar processing of pre-18S ribosomal RNA. In Homo sapiens (Human), this protein is Probable U3 small nucleolar RNA-associated protein 11.